The chain runs to 486 residues: MTEIRLTNTKTRRKEAFEPIDRKNVRLYVCGPTVYDRAHLGNGRPVVVFDVLFRLLRHVYGESHVTYVRNFTDVDDKINAAALARKDAGDPRSLEALIRERTDETIRWYHEDMDALGALRPTHEPRATEWIGAMIAMIEDLIAKGHAYEREGHVLFRVRSYRDYGALSGRSVDDMIAGARVEVAPFKEDPMDFVLWKPSDDELPGWDSPWGRGRPGWHIECSAMSYELLGATFDIHAGGIDLQFPHHENEIAQSCCAHPEGGFAKVWMHNEMLLVDGRKMSKSLGNFFTIHDLRKDRGIPGEVIRMVLLGTHYSKPMDWTAEKAAQAKATLWKWRKLTADVEPAGSPDAAVLAALADDLNTPAAITRLHSIAAQEDGALLKASASLLGLLEDDLRGWTLPPAIATASNVIEVSGSATAIVGTVPYRKTIERLLDERKQARLGKDFKRSDAIRDLLVGAGVIIKDTPAGAEWDLGPDFDPARLGEPE.

C30 serves as a coordination point for Zn(2+). Residues 32–42 (PTVYDRAHLGN) carry the 'HIGH' region motif. The Zn(2+) site is built by C221, H246, and E250. The 'KMSKS' region motif lies at 279–283 (KMSKS). An ATP-binding site is contributed by K282.

The protein belongs to the class-I aminoacyl-tRNA synthetase family. As to quaternary structure, monomer. Requires Zn(2+) as cofactor.

It localises to the cytoplasm. The catalysed reaction is tRNA(Cys) + L-cysteine + ATP = L-cysteinyl-tRNA(Cys) + AMP + diphosphate. This chain is Cysteine--tRNA ligase, found in Cereibacter sphaeroides (strain ATCC 17029 / ATH 2.4.9) (Rhodobacter sphaeroides).